We begin with the raw amino-acid sequence, 336 residues long: 3-isopropylmalate dehydrogenase (336 aa).

4 residues coordinate substrate: arginine 86, arginine 96, arginine 117, and aspartate 201. 3 residues coordinate Mg(2+): aspartate 201, aspartate 225, and aspartate 229. 258–270 contacts NAD(+); the sequence is GAAFDIAGKGIAN.

Belongs to the isocitrate and isopropylmalate dehydrogenases family. As to quaternary structure, homotetramer. It depends on Mg(2+) as a cofactor. The cofactor is Mn(2+).

Its subcellular location is the cytoplasm. It carries out the reaction (2R,3S)-3-isopropylmalate + NAD(+) = 4-methyl-2-oxopentanoate + CO2 + NADH. It participates in amino-acid biosynthesis; L-leucine biosynthesis; L-leucine from 3-methyl-2-oxobutanoate: step 3/4. Its function is as follows. Catalyzes the oxidation of 3-carboxy-2-hydroxy-4-methylpentanoate (3-isopropylmalate) to 3-carboxy-4-methyl-2-oxopentanoate. The product decarboxylates to 4-methyl-2 oxopentanoate. The polypeptide is 3-isopropylmalate dehydrogenase (leuB) (Saccharolobus solfataricus (strain ATCC 35092 / DSM 1617 / JCM 11322 / P2) (Sulfolobus solfataricus)).